Consider the following 637-residue polypeptide: Transmembrane 9 superfamily member 10 (637 aa).

Positions 1-23 (MAKVRILIFTLVLFFSLNVHIHG) are cleaved as a signal peptide. Topologically, residues 24–274 (FYLPGVAPQD…YLLMADDQIH (251 aa)) are lumenal. A helical transmembrane segment spans residues 275-295 (WFSIVNSMMIVLFLSGMVAMI). The Cytoplasmic segment spans residues 296-344 (MLRTLYRDISNYNQLESHEEALEETGWKLVHGDVFRPPTNPELLCVYAG). The helical transmembrane segment at 345-365 (TGVQCFGMILVTMIFACLGFL) threads the bilayer. Residues 366–370 (SPSNR) are Lumenal-facing. A helical transmembrane segment spans residues 371–391 (GGLMTAMLLLWVFMGLLAGYA). The Cytoplasmic segment spans residues 392-411 (SSRLYKTLRGTEWKRNALKT). Residues 412 to 432 (AFMFPATVFVAFFVLNAIIWG) traverse the membrane as a helical segment. The Lumenal segment spans residues 433–444 (QKSSGAVPFGTM). A helical transmembrane segment spans residues 445-465 (FALVVLWFGISVPLVFIGGYI). The Cytoplasmic portion of the chain corresponds to 466–494 (GFRKPAPEDPVKTNKIPRQIPTQAWYMNP). A helical transmembrane segment spans residues 495 to 515 (IFSILIGGILPFGAVFIELFF). At 516-527 (ILTSIWLHQFYY) the chain is on the lumenal side. The helical transmembrane segment at 528–548 (IFGFLFIVFIILIITCAEITV) threads the bilayer. Topologically, residues 549-566 (VLCYFQLCSEDYQWWWRS) are cytoplasmic. A helical transmembrane segment spans residues 567-587 (YLTSGSSAVYLFLYAVFYFYT). Topologically, residues 588–593 (KLEITK) are lumenal. Residues 594 to 614 (LVSAVLYFGYMLIVSYVFFVF) traverse the membrane as a helical segment. Residues 615 to 637 (TGAIGFYACFWFTRLIYSSVKID) lie on the Cytoplasmic side of the membrane. The Endoplasmic reticulum export signal motif lies at 626 to 631 (FTRLIY). Residues 635–637 (KID) carry the Golgi retention signal motif.

The protein belongs to the nonaspanin (TM9SF) (TC 9.A.2) family.

The protein resides in the endosome membrane. It localises to the golgi apparatus membrane. This is Transmembrane 9 superfamily member 10 from Arabidopsis thaliana (Mouse-ear cress).